Reading from the N-terminus, the 72-residue chain is Hirudin variant-2 (72 aa).

The N-terminal stretch at 1-7 is a signal peptide; sequence AICVSQA. The segment at 8-10 is interaction with thrombin active site; that stretch reads ITY. 3 disulfide bridges follow: Cys13–Cys21, Cys23–Cys35, and Cys29–Cys46. The disordered stretch occupies residues 47 to 72; the sequence is VTGEGTPNPESHNNGDFEEIPEEYLQ. A glycan (O-linked (GalNAc...) threonine) is linked at Thr52. Residues 62–72 are interaction with fibrinogen-binding exosite of thrombin; it reads DFEEIPEEYLQ. Over residues 62-72 the composition is skewed to acidic residues; sequence DFEEIPEEYLQ. The residue at position 70 (Tyr70) is a Sulfotyrosine.

This sequence belongs to the protease inhibitor I14 (hirudin) family.

It localises to the secreted. Its function is as follows. Hirudin is a potent thrombin-specific protease inhibitor. It forms a stable non-covalent complex with alpha-thrombin, thereby abolishing its ability to cleave fibrinogen. This Hirudo medicinalis (Medicinal leech) protein is Hirudin variant-2.